An 824-amino-acid polypeptide reads, in one-letter code: Probable receptor-like protein kinase At5g24010 (824 aa).

The N-terminal stretch at 1–24 is a signal peptide; the sequence is MAFPINLTQTLLFFFCPLLHLSFA. 5 N-linked (GlcNAc...) asparagine glycosylation sites follow: N6, N41, N204, N227, and N291. The Extracellular portion of the chain corresponds to 25–406; the sequence is AFTPTDNYLI…SSEVVSGKRN (382 aa). A helical membrane pass occupies residues 407-427; that stretch reads VVWIVVGSVLGGFVFLSLFFL. The Cytoplasmic segment spans residues 428–824; sequence SVLCLCRRKN…FSQLMTNAGR (397 aa). A disordered region spans residues 440 to 467; it reads TRSSESTGWTPLRRFRGSSNSRTTERTV. Residues 456–467 are compositionally biased toward polar residues; sequence GSSNSRTTERTV. The region spanning 489 to 764 is the Protein kinase domain; it reads FDRSLVIGVG…VLWNLEHVLQ (276 aa). Residues 495 to 503 and K517 each bind ATP; that span reads IGVGGFGMV. D613 (proton acceptor) is an active-site residue. Positions 777–803 are disordered; that stretch reads DYGDVTDPRTARQGLSNGSNIERDYGD.

Belongs to the protein kinase superfamily. Ser/Thr protein kinase family.

It is found in the membrane. The sequence is that of Probable receptor-like protein kinase At5g24010 from Arabidopsis thaliana (Mouse-ear cress).